Here is a 458-residue protein sequence, read N- to C-terminus: F-box/WD repeat-containing protein 9 (458 aa).

N-acetylmethionine is present on methionine 1. Disordered stretches follow at residues 1–30 and 42–64; these read MELP…DAQA and KSGL…SASE. Residues 16–26 are compositionally biased toward acidic residues; the sequence is DDSDPESETDP. Serine 18 bears the Phosphoserine mark. The residue at position 55 (threonine 55) is a Phosphothreonine. Position 59 is a phosphoserine (serine 59). Residues 76–123 enclose the F-box domain; it reads EPGLLSLPPELLLEICSYLDARLVLHVLSRVCHALRDLVSDHVTWRLR. 7 WD repeats span residues 171–210, 220–261, 264–301, 305–342, 344–381, 387–424, and 427–458; these read GHVA…TESN, KRNS…QQFG, KASS…ALLK, LHSR…VLQR, QLDS…FQLI, GHSF…RTIC, and RHDN…RLQA.

Interacts with SKP1 and CUL1.

Functionally, substrate-recognition component of the SCF (SKP1-CUL1-F-box protein)-type E3 ubiquitin ligase complex. This is F-box/WD repeat-containing protein 9 (FBXW9) from Homo sapiens (Human).